The following is a 122-amino-acid chain: MIQPQTRLKVADNTGAKEIMCIRLEGGSNRKFSNVGDVIVASVKSATPGGVVKKGEVVKAVIVRTKKGIARKDGTYIRFDDNAAVIIRDDKQPRGTRIFGPVARELREKDFMKIISLAPEVL.

It belongs to the universal ribosomal protein uL14 family. In terms of assembly, part of the 50S ribosomal subunit. Forms a cluster with proteins L3 and L19. In the 70S ribosome, L14 and L19 interact and together make contacts with the 16S rRNA in bridges B5 and B8.

Functionally, binds to 23S rRNA. Forms part of two intersubunit bridges in the 70S ribosome. The protein is Large ribosomal subunit protein uL14 of Thermoanaerobacter pseudethanolicus (strain ATCC 33223 / 39E) (Clostridium thermohydrosulfuricum).